Reading from the N-terminus, the 330-residue chain is Agamous-like MADS-box protein AGL75 (330 aa).

One can recognise an MADS-box domain in the interval 19–61; sequence TSLSNRLETIFKKASELCTLCDIEACVIYYGPDGELKTWPKEK.

Interacts with MEE14/CBP1.

It is found in the nucleus. Its function is as follows. Probable transcription factor that may function in the maintenance of the proper function of the central cell in pollen tube attraction. The polypeptide is Agamous-like MADS-box protein AGL75 (Arabidopsis thaliana (Mouse-ear cress)).